Reading from the N-terminus, the 89-residue chain is Small ribosomal subunit protein uS17 (89 aa).

It belongs to the universal ribosomal protein uS17 family. In terms of assembly, part of the 30S ribosomal subunit.

Functionally, one of the primary rRNA binding proteins, it binds specifically to the 5'-end of 16S ribosomal RNA. The chain is Small ribosomal subunit protein uS17 from Bacteroides fragilis (strain ATCC 25285 / DSM 2151 / CCUG 4856 / JCM 11019 / LMG 10263 / NCTC 9343 / Onslow / VPI 2553 / EN-2).